The following is a 392-amino-acid chain: Probable tRNA pseudouridine synthase D 1 (392 aa).

The active-site Nucleophile is aspartate 92. The region spanning 167-354 (YFLNYYGVQR…FIGDRRAMIG (188 aa)) is the TRUD domain.

This sequence belongs to the pseudouridine synthase TruD family.

It carries out the reaction uridine(13) in tRNA = pseudouridine(13) in tRNA. Functionally, could be responsible for synthesis of pseudouridine from uracil-13 in transfer RNAs. The sequence is that of Probable tRNA pseudouridine synthase D 1 from Methanocaldococcus jannaschii (strain ATCC 43067 / DSM 2661 / JAL-1 / JCM 10045 / NBRC 100440) (Methanococcus jannaschii).